The primary structure comprises 101 residues: Large ribosomal subunit protein uL23 (101 aa).

Belongs to the universal ribosomal protein uL23 family. In terms of assembly, part of the 50S ribosomal subunit. Contacts protein L29, and trigger factor when it is bound to the ribosome.

In terms of biological role, one of the early assembly proteins it binds 23S rRNA. One of the proteins that surrounds the polypeptide exit tunnel on the outside of the ribosome. Forms the main docking site for trigger factor binding to the ribosome. This Wigglesworthia glossinidia brevipalpis protein is Large ribosomal subunit protein uL23.